Reading from the N-terminus, the 427-residue chain is Tol-Pal system protein TolB (427 aa).

The N-terminal stretch at 1 to 27 is a signal peptide; the sequence is MPVSLLRALLVFSLLCLGLSATRAAHA.

It belongs to the TolB family. As to quaternary structure, the Tol-Pal system is composed of five core proteins: the inner membrane proteins TolA, TolQ and TolR, the periplasmic protein TolB and the outer membrane protein Pal. They form a network linking the inner and outer membranes and the peptidoglycan layer.

It localises to the periplasm. Part of the Tol-Pal system, which plays a role in outer membrane invagination during cell division and is important for maintaining outer membrane integrity. In Thiobacillus denitrificans (strain ATCC 25259 / T1), this protein is Tol-Pal system protein TolB.